The chain runs to 468 residues: ATP synthase subunit beta (468 aa).

155-162 (GGAGVGKT) contributes to the ATP binding site.

This sequence belongs to the ATPase alpha/beta chains family. As to quaternary structure, F-type ATPases have 2 components, CF(1) - the catalytic core - and CF(0) - the membrane proton channel. CF(1) has five subunits: alpha(3), beta(3), gamma(1), delta(1), epsilon(1). CF(0) has three main subunits: a(1), b(2) and c(9-12). The alpha and beta chains form an alternating ring which encloses part of the gamma chain. CF(1) is attached to CF(0) by a central stalk formed by the gamma and epsilon chains, while a peripheral stalk is formed by the delta and b chains.

Its subcellular location is the cell membrane. The catalysed reaction is ATP + H2O + 4 H(+)(in) = ADP + phosphate + 5 H(+)(out). In terms of biological role, produces ATP from ADP in the presence of a proton gradient across the membrane. The catalytic sites are hosted primarily by the beta subunits. This chain is ATP synthase subunit beta, found in Streptococcus pneumoniae (strain CGSP14).